The sequence spans 153 residues: MTHDNKLQVEAIKCGTVIDHIPAHVGFKLLTLFKLTETDRRVTIGLNLPSNAQGSKDLIKIEDVFLSEEQVNQLAIYAPRATVNCIENYSVVRKMVPSLPERIDSVLTCPNSNCISRSEPVCSSFSVRARAGEVLLKCKYCEKEFAHHAVMEQ.

4 residues coordinate Zn(2+): cysteine 109, cysteine 114, cysteine 138, and cysteine 141.

Belongs to the PyrI family. In terms of assembly, contains catalytic and regulatory chains. Requires Zn(2+) as cofactor.

Functionally, involved in allosteric regulation of aspartate carbamoyltransferase. The polypeptide is Aspartate carbamoyltransferase regulatory chain (Edwardsiella ictaluri (strain 93-146)).